Here is a 512-residue protein sequence, read N- to C-terminus: Glutathione-binding protein GsiB (512 aa).

The N-terminal stretch at 1–26 (MARAVHRSGLVALGIATALMASCAFA) is a signal peptide.

This sequence belongs to the bacterial solute-binding protein 5 family. The complex is composed of two ATP-binding proteins (GsiA), two transmembrane proteins (GsiC and GsiD) and a solute-binding protein (GsiB). In the presence of glutathione, interacts with the transmembrane proteins GsiC and GsiD.

Its subcellular location is the periplasm. Functionally, part of the ABC transporter complex GsiABCD involved in glutathione import. Binds glutathione. This is Glutathione-binding protein GsiB from Escherichia coli (strain K12).